The following is a 633-amino-acid chain: Transcriptional repressor p66-alpha (633 aa).

The span at 1–18 shows a compositional bias: basic and acidic residues; that stretch reads MTEEACRTRSQKRALERD. Disordered stretches follow at residues 1–59 and 73–119; these read MTEE…PTQG and RGEG…RVNG. Thr20 and Thr49 each carry phosphothreonine. Basic and acidic residues predominate over residues 86-99; it reads RTSHSDMKSERRPP. Residue Lys93 forms a Glycyl lysine isopeptide (Lys-Gly) (interchain with G-Cter in SUMO2) linkage. 5 positions are modified to phosphoserine: Ser100, Ser107, Ser113, Ser114, and Ser137. Residues 108–119 are compositionally biased toward polar residues; sequence DNEQPSSPRVNG. Residues 139–174 are a coiled coil; sequence EERERMIKQLKEELRLEEAKLVLLKKLRQSQIQKEA. The interval 144–178 is CR1; interaction with HDAC1, HDAC2, MBD2 and MTA2; the sequence is MIKQLKEELRLEEAKLVLLKKLRQSQIQKEATAQK. Positions 172–188 are enriched in polar residues; the sequence is KEATAQKPTGSVGSTVT. The segment at 172-238 is disordered; that stretch reads KEATAQKPTG…QASSKLGPQA (67 aa). A Glycyl lysine isopeptide (Lys-Gly) (interchain with G-Cter in SUMO2) cross-link involves residue Lys178. The tract at residues 181–295 is interaction with ZMYND8; the sequence is GSVGSTVTTP…IIQQGLIRVA (115 aa). Thr189 is modified (phosphothreonine). Polar residues predominate over residues 196 to 212; the sequence is GTQNIPAGKPSLQTSSA. Residue Lys204 forms a Glycyl lysine isopeptide (Lys-Gly) (interchain with G-Cter in SUMO2) linkage. At Arg225 the chain carries Omega-N-methylarginine. Over residues 228–238 the composition is skewed to polar residues; the sequence is QQASSKLGPQA. Residue Lys233 forms a Glycyl lysine isopeptide (Lys-Gly) (interchain with G-Cter in SUMO2) linkage. 3 positions are modified to omega-N-methylarginine: Arg249, Arg258, and Arg273. Ser275 carries the post-translational modification Phosphoserine. The residue at position 285 (Arg285) is an Omega-N-methylarginine. Residues Ser340 and Ser343 each carry the phosphoserine modification. A CR2; histone tail-binding and interaction with CHD4 and CDK2AP1 region spans residues 340–480; the sequence is SPASRQAAAK…EIEQRLLQQG (141 aa). The GATA-type zinc-finger motif lies at 411-464; it reads SREPYMCAQCKTDFTCRWREEKSGAIMCENCMTTNQKKALKVEHTSRLKAAFVK. Residues Lys464 and Lys487 each participate in a glycyl lysine isopeptide (Lys-Gly) (interchain with G-Cter in SUMO2) cross-link. Residue Ser512 is modified to Phosphoserine. The residue at position 539 (Arg539) is an Asymmetric dimethylarginine; alternate. Arg539 bears the Omega-N-methylarginine; alternate mark. Ser546 and Ser548 each carry phosphoserine. A Glycyl lysine isopeptide (Lys-Gly) (interchain with G-Cter in SUMO2) cross-link involves residue Lys550. At Ser556 the chain carries Phosphoserine. Residues 561 to 585 are disordered; it reads VSRTGRHSERTVSAGKGSATSNWKK. Lys585 participates in a covalent cross-link: Glycyl lysine isopeptide (Lys-Gly) (interchain with G-Cter in SUMO2). Ser598 carries the post-translational modification Phosphoserine. Residue Lys605 forms a Glycyl lysine isopeptide (Lys-Gly) (interchain with G-Cter in SUMO2) linkage.

Homooligomer. Component of the nucleosome remodeling and deacetylase (NuRD) repressor complex, composed of core proteins MTA1, MTA2, MTA3, RBBP4, RBBP7, HDAC1, HDAC2, MBD2, MBD3, and peripherally associated proteins CDK2AP1, CDK2AP2, GATAD2A, GATAD2B, CHD3, CHD4 and CHD5. The exact stoichiometry of the NuRD complex is unknown, and some subunits such as MBD2 and MBD3, GATAD2A and GATAD2B, and CHD3, CHD4 and CHD5 define mutually exclusive NuRD complexes. Component of the MeCP1 histone deacetylase complex. Interacts with CDK2AP1. Interacts with CHD4. Interacts with ERCC6. Interacts with HDAC1. Interacts with HDAC2. Interacts with MBD2; this interaction is required for the enhancement of MBD2-mediated repression and for targeting to the chromatin. Interacts with MBD3. Interacts with MTA2. Interacts with ZMYND8. Interacts with histone tails, including that of histones H2A, H2B, H3 and H4, the interaction is reduced by histone acetylation. As to expression, ubiquitous, both in fetal and adult tissues.

It localises to the nucleus speckle. It is found in the nucleus. The protein localises to the chromosome. In terms of biological role, transcriptional repressor. Acts as a component of the histone deacetylase NuRD complex which participates in the remodeling of chromatin. Enhances MBD2-mediated repression. Efficient repression requires the presence of GATAD2B. The polypeptide is Transcriptional repressor p66-alpha (GATAD2A) (Homo sapiens (Human)).